The sequence spans 174 residues: MEECLKMIYTRRSIRVYSDRQISDEDIEKILKAAMLAPSAGNEQPWHFIVVRDREMLKKMSEAFTFGQMLPNASAAIVVCADPKLSKYPYDMWVQDCSAATENILLAARCLGIGSVWLGVYPREERMKALRELLGIPENIVVFSVVSLGYPKDEKDFYEADDRFNPDRIHREKW.

107 to 112 is an NAD(+) binding site; the sequence is AARCLG.

Belongs to the nitroreductase family. It depends on FMN as a cofactor.

The chain is Putative NADH dehydrogenase/NAD(P)H nitroreductase AF_2267 from Archaeoglobus fulgidus (strain ATCC 49558 / DSM 4304 / JCM 9628 / NBRC 100126 / VC-16).